Here is a 326-residue protein sequence, read N- to C-terminus: MQSNSLLKPRIIDVQSVSPVQARVTMEPFERGFGHTLGNALRRILLSSLPGYAPTEVSIEGVLHEYSTLDGVREDIVDLLLNLKGVVLKLHSRSEATLRLAKSGDGVVTARDIEVGHDVEIINPDHVIAHLAPGGKLDMQIKVEEGRGYVPGNVRPAAGDTKTIGRVVLDASFSPVRRVSYLVESARVEQRTDLDRLVIDIETNGAVDPEEAIRYAARVLMDQLSVFADLEGTAPVVEQSAAQTIDPVLLRPVDDLELTVRSANCLKAENIYYIGDLIQRTETELLKTPNLGRKSLNEIKEVLASRGLTLGMKLENWPPAGLEKLG.

An alpha N-terminal domain (alpha-NTD) region spans residues 1–231 (MQSNSLLKPR…DQLSVFADLE (231 aa)). Residues 245-326 (IDPVLLRPVD…WPPAGLEKLG (82 aa)) are alpha C-terminal domain (alpha-CTD).

Belongs to the RNA polymerase alpha chain family. In terms of assembly, homodimer. The RNAP catalytic core consists of 2 alpha, 1 beta, 1 beta' and 1 omega subunit. When a sigma factor is associated with the core the holoenzyme is formed, which can initiate transcription.

It carries out the reaction RNA(n) + a ribonucleoside 5'-triphosphate = RNA(n+1) + diphosphate. Functionally, DNA-dependent RNA polymerase catalyzes the transcription of DNA into RNA using the four ribonucleoside triphosphates as substrates. The sequence is that of DNA-directed RNA polymerase subunit alpha from Aromatoleum aromaticum (strain DSM 19018 / LMG 30748 / EbN1) (Azoarcus sp. (strain EbN1)).